Reading from the N-terminus, the 425-residue chain is Enolase (425 aa).

The tract at residues 31-54 is disordered; sequence TGSAIVPSGASTGEKEAVELRDSD. Positions 43-54 are enriched in basic and acidic residues; sequence GEKEAVELRDSD. Position 162 (Gln-162) interacts with (2R)-2-phosphoglycerate. Glu-204 acts as the Proton donor in catalysis. Mg(2+) contacts are provided by Asp-241, Glu-285, and Asp-312. (2R)-2-phosphoglycerate-binding residues include Lys-337, Arg-366, Ser-367, and Lys-388. The Proton acceptor role is filled by Lys-337.

This sequence belongs to the enolase family. Mg(2+) is required as a cofactor.

It is found in the cytoplasm. It localises to the secreted. Its subcellular location is the cell surface. The catalysed reaction is (2R)-2-phosphoglycerate = phosphoenolpyruvate + H2O. It functions in the pathway carbohydrate degradation; glycolysis; pyruvate from D-glyceraldehyde 3-phosphate: step 4/5. Its function is as follows. Catalyzes the reversible conversion of 2-phosphoglycerate (2-PG) into phosphoenolpyruvate (PEP). It is essential for the degradation of carbohydrates via glycolysis. This is Enolase from Gloeobacter violaceus (strain ATCC 29082 / PCC 7421).